A 186-amino-acid chain; its full sequence is Lumazine protein (186 aa).

Lumazine-binding repeat units follow at residues 1–96 and 97–186; these read MFRG…VGRG and GLTG…LNEW.

6,7-dimethyl-8-(1-D-ribityl)lumazine is required as a cofactor.

In terms of biological role, antenna protein that modulates the color of the bioluminescence emission of the luciferase. In the presence of LumP, luciferase emission is shifted to higher energy values (shorter wavelength). The chain is Lumazine protein (lumP) from Photobacterium leiognathi.